A 227-amino-acid polypeptide reads, in one-letter code: 7-cyano-7-deazaguanine synthase (227 aa).

ATP is bound at residue 10–20 (LSGGLDSCVAT). Zn(2+)-binding residues include Cys-193, Cys-201, Cys-204, and Cys-207.

It belongs to the QueC family. The cofactor is Zn(2+).

The catalysed reaction is 7-carboxy-7-deazaguanine + NH4(+) + ATP = 7-cyano-7-deazaguanine + ADP + phosphate + H2O + H(+). It participates in purine metabolism; 7-cyano-7-deazaguanine biosynthesis. Catalyzes the ATP-dependent conversion of 7-carboxy-7-deazaguanine (CDG) to 7-cyano-7-deazaguanine (preQ(0)). The polypeptide is 7-cyano-7-deazaguanine synthase (Methanobrevibacter smithii (strain ATCC 35061 / DSM 861 / OCM 144 / PS)).